We begin with the raw amino-acid sequence, 378 residues long: tRNA (guanine(26)-N(2))-dimethyltransferase (378 aa).

Residues 4 to 374 form the Trm1 methyltransferase domain; it reads KEVTEGKVRI…KGYEEIIRCV (371 aa). Residues R44, R69, D87, D114, and A115 each contribute to the S-adenosyl-L-methionine site. The Zn(2+) site is built by C246, C249, C263, and C266.

It belongs to the class I-like SAM-binding methyltransferase superfamily. Trm1 family.

The enzyme catalyses guanosine(26) in tRNA + 2 S-adenosyl-L-methionine = N(2)-dimethylguanosine(26) in tRNA + 2 S-adenosyl-L-homocysteine + 2 H(+). Functionally, dimethylates a single guanine residue at position 26 of a number of tRNAs using S-adenosyl-L-methionine as donor of the methyl groups. This is tRNA (guanine(26)-N(2))-dimethyltransferase from Saccharolobus islandicus (strain L.S.2.15 / Lassen #1) (Sulfolobus islandicus).